We begin with the raw amino-acid sequence, 112 residues long: Protein GAST1 (112 aa).

The first 25 residues, 1-25 (MAGKMSIVLFVLLVVFLTQNQVSRA), serve as a signal peptide directing secretion.

This sequence belongs to the GASA family. In terms of processing, six disulfide bonds may be present. As to expression, all shoot organs.

Its subcellular location is the secreted. This is Protein GAST1 (GAST1) from Solanum lycopersicum (Tomato).